The following is a 309-amino-acid chain: Olfactory receptor 7A40 (309 aa).

Topologically, residues 1-26 (MELKNDTQISKFILLGISEDPLWQPF) are extracellular. N-linked (GlcNAc...) asparagine glycosylation is present at Asn5. Residues 27–47 (LFGLFLFMYLVTLLGNLLIII) traverse the membrane as a helical segment. Residues 48 to 57 (ATITDSHLHT) lie on the Cytoplasmic side of the membrane. The chain crosses the membrane as a helical span at residues 58–78 (PMYFFLSNLSFADICFTSASI). Over 79 to 97 (PKMLVNIQTKNKVITYEGC) the chain is Extracellular. A disulfide bond links Cys97 and Cys179. A helical transmembrane segment spans residues 98–118 (ISQVFFFILFGVLDNFLLAVM). The Cytoplasmic portion of the chain corresponds to 119-139 (AYDRYVAICHPLHYMVIMNCR). A helical transmembrane segment spans residues 140–160 (LCGFLVLGSWVTTALNSLLQS). Residues 161–196 (SMALRLSFCTDLKIPHFVCELNQLVLLACNDTFPND) lie on the Extracellular side of the membrane. A helical transmembrane segment spans residues 197-217 (MVMYFAAILLGGGPLAGILYS). The Cytoplasmic portion of the chain corresponds to 218–244 (YSKIVSSIRAISSSQGKYKAFSTCASH). Residues 245–265 (LSVVSLFYSTLLGVYLSSSFT) form a helical membrane-spanning segment. Residues 266–269 (QNSH) are Extracellular-facing. A helical transmembrane segment spans residues 270-292 (STARASVMYSVVTPMLNPFIYSL). At 293-309 (RNKDLMGALRRLLRRKS) the chain is on the cytoplasmic side.

The protein belongs to the G-protein coupled receptor 1 family.

It localises to the cell membrane. Odorant receptor. This Mus musculus (Mouse) protein is Olfactory receptor 7A40.